We begin with the raw amino-acid sequence, 88 residues long: Defensin-like protein 98 (88 aa).

An N-terminal signal peptide occupies residues 1-29 (MGSLRVSTVVIAVVACLSILLISPTEVDG). Intrachain disulfides connect cysteine 33–cysteine 76, cysteine 40–cysteine 62, cysteine 46–cysteine 73, and cysteine 50–cysteine 75.

Belongs to the DEFL family.

It is found in the secreted. This Arabidopsis thaliana (Mouse-ear cress) protein is Defensin-like protein 98.